The primary structure comprises 319 residues: Probable casein kinase II subunit alpha homolog (319 aa).

The Protein kinase domain maps to 37–316 (YQIYQRMGRG…ADECLRHPLF (280 aa)). Residues 43–51 (MGRGKYSEV) and lysine 64 contribute to the ATP site. The active-site Proton acceptor is the aspartate 151.

This sequence belongs to the protein kinase superfamily. Ser/Thr protein kinase family. CK2 subfamily. In terms of assembly, tetramer composed of two alpha chains, one beta chain and one beta' chain.

It catalyses the reaction L-seryl-[protein] + ATP = O-phospho-L-seryl-[protein] + ADP + H(+). The catalysed reaction is L-threonyl-[protein] + ATP = O-phospho-L-threonyl-[protein] + ADP + H(+). Its function is as follows. Catalytic subunit of a constitutively active serine/threonine-protein kinase complex that phosphorylates a large number of substrates containing acidic residues C-terminal to the phosphorylated serine or threonine. The polypeptide is Probable casein kinase II subunit alpha homolog (CKA1) (Encephalitozoon cuniculi (strain GB-M1) (Microsporidian parasite)).